We begin with the raw amino-acid sequence, 386 residues long: 2-isopropylmalate synthase (386 aa).

Residues 15 to 269 enclose the Pyruvate carboxyltransferase domain; it reads IRIFDTTLRD…ETNVKTWKLY (255 aa). Residues aspartate 24, histidine 207, histidine 209, and asparagine 243 each contribute to the a divalent metal cation site.

It belongs to the alpha-IPM synthase/homocitrate synthase family. As to quaternary structure, homodimer. The cofactor is a divalent metal cation.

It carries out the reaction 3-methyl-2-oxobutanoate + acetyl-CoA + H2O = (2S)-2-isopropylmalate + CoA + H(+). Its pathway is amino-acid biosynthesis; L-leucine biosynthesis; L-leucine from 3-methyl-2-oxobutanoate: step 1/4. Catalyzes the condensation of the acetyl group of acetyl-CoA with 3-methyl-2-oxobutanoate (2-oxoisovalerate) to form 3-carboxy-3-hydroxy-4-methylpentanoate (2-isopropylmalate). Carries out the first step of the leucine biosynthesis pathway. The polypeptide is 2-isopropylmalate synthase (leuA) (Saccharolobus solfataricus (strain ATCC 35092 / DSM 1617 / JCM 11322 / P2) (Sulfolobus solfataricus)).